We begin with the raw amino-acid sequence, 620 residues long: Glutathione-regulated potassium-efflux system protein KefC (620 aa).

Transmembrane regions (helical) follow at residues His-4–Val-24, Leu-26–Leu-46, Ser-54–Leu-74, Gly-90–Leu-110, Val-114–Met-134, Phe-149–Leu-169, Met-178–Leu-198, Val-218–Gly-238, Gly-270–Leu-290, Leu-294–Ile-314, Trp-327–Gln-347, and Ser-359–Asn-379. The RCK N-terminal domain maps to Gln-399–Thr-518. The segment at Gly-597–Ser-620 is disordered.

Belongs to the monovalent cation:proton antiporter 2 (CPA2) transporter (TC 2.A.37) family. KefC subfamily. In terms of assembly, homodimer. Interacts with the regulatory subunit KefF.

Its subcellular location is the cell inner membrane. Pore-forming subunit of a potassium efflux system that confers protection against electrophiles. Catalyzes K(+)/H(+) antiport. In Escherichia fergusonii (strain ATCC 35469 / DSM 13698 / CCUG 18766 / IAM 14443 / JCM 21226 / LMG 7866 / NBRC 102419 / NCTC 12128 / CDC 0568-73), this protein is Glutathione-regulated potassium-efflux system protein KefC.